Here is a 218-residue protein sequence, read N- to C-terminus: 3-dehydroquinate dehydratase (218 aa).

Residues 29–31 (EFR) and R56 contribute to the 3-dehydroquinate site. Catalysis depends on H116, which acts as the Proton donor/acceptor. K142 serves as the catalytic Schiff-base intermediate with substrate. 3-dehydroquinate contacts are provided by R180, S200, and Q204.

Belongs to the type-I 3-dehydroquinase family. In terms of assembly, homodimer.

The catalysed reaction is 3-dehydroquinate = 3-dehydroshikimate + H2O. The protein operates within metabolic intermediate biosynthesis; chorismate biosynthesis; chorismate from D-erythrose 4-phosphate and phosphoenolpyruvate: step 3/7. Involved in the third step of the chorismate pathway, which leads to the biosynthesis of aromatic amino acids. Catalyzes the cis-dehydration of 3-dehydroquinate (DHQ) and introduces the first double bond of the aromatic ring to yield 3-dehydroshikimate. This is 3-dehydroquinate dehydratase from Methanococcus maripaludis (strain DSM 14266 / JCM 13030 / NBRC 101832 / S2 / LL).